We begin with the raw amino-acid sequence, 588 residues long: Cyclin-dependent kinase 8 (588 aa).

Residues 26 to 348 (FENSKEIGRG…CEEAMNDIYF (323 aa)) form the Protein kinase domain. Residues 32-40 (IGRGTYGLV) and K60 contribute to the ATP site. Catalysis depends on D158, which acts as the Proton acceptor. 3 disordered regions span residues 376–426 (MTVA…GAHP), 510–529 (PGPS…AVPG), and 546–588 (MRAP…QYHR). Residues 382 to 426 (QAQQQHQQQQVQMQQQPQMGQQQMMGQPQMVQPQMGQPPMGGAHP) show a composition bias toward low complexity. Residues 557-588 (MPGRGMAPPQMGQQQPGPNQQQQQQWQQQYHR) are compositionally biased toward low complexity.

This sequence belongs to the protein kinase superfamily. CMGC Ser/Thr protein kinase family. CDC2/CDKX subfamily. Component of the Mediator complex. Requires Mg(2+) as cofactor.

The protein localises to the nucleus. The enzyme catalyses L-seryl-[protein] + ATP = O-phospho-L-seryl-[protein] + ADP + H(+). It catalyses the reaction L-threonyl-[protein] + ATP = O-phospho-L-threonyl-[protein] + ADP + H(+). The catalysed reaction is [DNA-directed RNA polymerase] + ATP = phospho-[DNA-directed RNA polymerase] + ADP + H(+). Component of the Mediator complex, a coactivator involved in regulated gene transcription of nearly all RNA polymerase II-dependent genes. Mediator functions as a bridge to convey information from gene-specific regulatory proteins to the basal RNA polymerase II transcription machinery. Mediator is recruited to promoters by direct interactions with regulatory proteins and serves as a scaffold for the assembly of a functional pre-initiation complex with RNA polymerase II and the general transcription factors. Phosphorylates the CTD (C-terminal domain) of the large subunit of RNA polymerase II (RNAp II), which may inhibit the formation of a transcription initiation complex. This chain is Cyclin-dependent kinase 8 (cdk-8), found in Caenorhabditis elegans.